A 160-amino-acid polypeptide reads, in one-letter code: Phosphopantetheine adenylyltransferase (160 aa).

Threonine 10 lines the substrate pocket. ATP is bound by residues 10–11 (TF) and histidine 18. 3 residues coordinate substrate: lysine 42, leucine 74, and arginine 88. ATP contacts are provided by residues 89–91 (GLR), glutamate 99, and 124–130 (NSFISST).

Belongs to the bacterial CoaD family. As to quaternary structure, homohexamer. Requires Mg(2+) as cofactor.

It is found in the cytoplasm. The catalysed reaction is (R)-4'-phosphopantetheine + ATP + H(+) = 3'-dephospho-CoA + diphosphate. It participates in cofactor biosynthesis; coenzyme A biosynthesis; CoA from (R)-pantothenate: step 4/5. In terms of biological role, reversibly transfers an adenylyl group from ATP to 4'-phosphopantetheine, yielding dephospho-CoA (dPCoA) and pyrophosphate. In Shewanella piezotolerans (strain WP3 / JCM 13877), this protein is Phosphopantetheine adenylyltransferase.